The chain runs to 232 residues: Large ribosomal subunit protein uL1 (232 aa).

Belongs to the universal ribosomal protein uL1 family. In terms of assembly, part of the 50S ribosomal subunit.

Functionally, binds directly to 23S rRNA. The L1 stalk is quite mobile in the ribosome, and is involved in E site tRNA release. Protein L1 is also a translational repressor protein, it controls the translation of the L11 operon by binding to its mRNA. This Bordetella petrii (strain ATCC BAA-461 / DSM 12804 / CCUG 43448) protein is Large ribosomal subunit protein uL1.